The following is a 502-amino-acid chain: Probable cytosol aminopeptidase (502 aa).

Mn(2+)-binding residues include K269 and D274. The active site involves K281. Positions 292, 351, and 353 each coordinate Mn(2+). R355 is a catalytic residue.

The protein belongs to the peptidase M17 family. Requires Mn(2+) as cofactor.

Its subcellular location is the cytoplasm. The catalysed reaction is Release of an N-terminal amino acid, Xaa-|-Yaa-, in which Xaa is preferably Leu, but may be other amino acids including Pro although not Arg or Lys, and Yaa may be Pro. Amino acid amides and methyl esters are also readily hydrolyzed, but rates on arylamides are exceedingly low.. It carries out the reaction Release of an N-terminal amino acid, preferentially leucine, but not glutamic or aspartic acids.. Presumably involved in the processing and regular turnover of intracellular proteins. Catalyzes the removal of unsubstituted N-terminal amino acids from various peptides. This chain is Probable cytosol aminopeptidase, found in Aliivibrio fischeri (strain MJ11) (Vibrio fischeri).